Consider the following 93-residue polypeptide: Small ribosomal subunit protein uS19 (93 aa).

The protein belongs to the universal ribosomal protein uS19 family.

Its function is as follows. Protein S19 forms a complex with S13 that binds strongly to the 16S ribosomal RNA. The polypeptide is Small ribosomal subunit protein uS19 (Mycolicibacterium smegmatis (strain ATCC 700084 / mc(2)155) (Mycobacterium smegmatis)).